The sequence spans 397 residues: DnaJ homolog subfamily A member 1 (397 aa).

The 63-residue stretch at 6–68 (TYYDVLGVKP…KKRELYDKGG (63 aa)) folds into the J domain. Position 66 is an N6-acetyllysine (Lys66). Ser83 carries the post-translational modification Phosphoserine. The CR-type zinc finger occupies 121–205 (GATRKLALQK…CNGRKIVREK (85 aa)). Residues Cys134, Cys137, Cys150, Cys153, Cys177, Cys180, Cys193, and Cys196 each contribute to the Zn(2+) site. CXXCXGXG motif repeat units lie at residues 134-141 (CDKCEGRG), 150-157 (CPNCRGTG), 177-184 (CMECQGHG), and 193-200 (CKSCNGRK). The residue at position 335 (Ser335) is a Phosphoserine. The disordered stretch occupies residues 352–397 (VEETDEMDQVELVDFDPNQERRRHYNGEAYEDDEHHPRGGVQCQTS). Residues 353-365 (EETDEMDQVELVD) are compositionally biased toward acidic residues. The residue at position 381 (Tyr381) is a Phosphotyrosine. Cys394 is modified (cysteine methyl ester). Cys394 is lipidated: S-farnesyl cysteine. The propeptide at 395 to 397 (QTS) is removed in mature form.

In terms of assembly, identified in a complex with HSPA1B and BAX. Interacts with RNF207.

The protein localises to the membrane. The protein resides in the cytoplasm. It is found in the microsome. It localises to the mitochondrion. Its subcellular location is the nucleus. The protein localises to the perinuclear region. Functionally, co-chaperone for HSPA8/Hsc70. Plays a role in protein transport into mitochondria via its role as co-chaperone. Functions as co-chaperone for HSPA1B and negatively regulates the translocation of BAX from the cytosol to mitochondria in response to cellular stress, thereby protecting cells against apoptosis. Stimulates ATP hydrolysis, but not the folding of unfolded proteins mediated by HSPA1A (in vitro). Promotes apoptosis in response to cellular stress mediated by exposure to anisomycin or UV. The protein is DnaJ homolog subfamily A member 1 (DNAJA1) of Bos taurus (Bovine).